The primary structure comprises 313 residues: N-acetyl-gamma-glutamyl-phosphate reductase (313 aa).

Cys-117 is an active-site residue.

This sequence belongs to the NAGSA dehydrogenase family. Type 2 subfamily.

Its subcellular location is the cytoplasm. The enzyme catalyses N-acetyl-L-glutamate 5-semialdehyde + phosphate + NADP(+) = N-acetyl-L-glutamyl 5-phosphate + NADPH + H(+). The protein operates within amino-acid biosynthesis; L-arginine biosynthesis; N(2)-acetyl-L-ornithine from L-glutamate: step 3/4. In terms of biological role, catalyzes the NADPH-dependent reduction of N-acetyl-5-glutamyl phosphate to yield N-acetyl-L-glutamate 5-semialdehyde. This Burkholderia cenocepacia (strain ATCC BAA-245 / DSM 16553 / LMG 16656 / NCTC 13227 / J2315 / CF5610) (Burkholderia cepacia (strain J2315)) protein is N-acetyl-gamma-glutamyl-phosphate reductase.